The primary structure comprises 514 residues: Anthranilate synthase component 1 (514 aa).

Residues Thr-40 and 290-292 (PYM) contribute to the L-tryptophan site. A chorismate-binding site is contributed by 327–328 (GT). Glu-360 is a binding site for Mg(2+). Residues Tyr-448, Arg-468, 482–484 (GAG), and Gly-484 contribute to the chorismate site. Mg(2+) is bound at residue Glu-497.

It belongs to the anthranilate synthase component I family. Heterotetramer consisting of two non-identical subunits: a beta subunit (TrpG) and a large alpha subunit (TrpE). Mg(2+) serves as cofactor.

It catalyses the reaction chorismate + L-glutamine = anthranilate + pyruvate + L-glutamate + H(+). It participates in amino-acid biosynthesis; L-tryptophan biosynthesis; L-tryptophan from chorismate: step 1/5. Its activity is regulated as follows. Feedback inhibited by tryptophan. Part of a heterotetrameric complex that catalyzes the two-step biosynthesis of anthranilate, an intermediate in the biosynthesis of L-tryptophan. In the first step, the glutamine-binding beta subunit (TrpG) of anthranilate synthase (AS) provides the glutamine amidotransferase activity which generates ammonia as a substrate that, along with chorismate, is used in the second step, catalyzed by the large alpha subunit of AS (TrpE) to produce anthranilate. In the absence of TrpG, TrpE can synthesize anthranilate directly from chorismate and high concentrations of ammonia. The sequence is that of Anthranilate synthase component 1 (trpE) from Buchnera aphidicola subsp. Rhopalosiphum padi.